Reading from the N-terminus, the 252-residue chain is Imidazole glycerol phosphate synthase subunit HisF (252 aa).

Catalysis depends on residues Asp-11 and Asp-130.

It belongs to the HisA/HisF family. In terms of assembly, heterodimer of HisH and HisF.

It localises to the cytoplasm. It catalyses the reaction 5-[(5-phospho-1-deoxy-D-ribulos-1-ylimino)methylamino]-1-(5-phospho-beta-D-ribosyl)imidazole-4-carboxamide + L-glutamine = D-erythro-1-(imidazol-4-yl)glycerol 3-phosphate + 5-amino-1-(5-phospho-beta-D-ribosyl)imidazole-4-carboxamide + L-glutamate + H(+). Its pathway is amino-acid biosynthesis; L-histidine biosynthesis; L-histidine from 5-phospho-alpha-D-ribose 1-diphosphate: step 5/9. In terms of biological role, IGPS catalyzes the conversion of PRFAR and glutamine to IGP, AICAR and glutamate. The HisF subunit catalyzes the cyclization activity that produces IGP and AICAR from PRFAR using the ammonia provided by the HisH subunit. This is Imidazole glycerol phosphate synthase subunit HisF from Bacillus cereus (strain AH187).